Here is a 184-residue protein sequence, read N- to C-terminus: Glutathione-regulated potassium-efflux system ancillary protein KefG (184 aa).

It belongs to the NAD(P)H dehydrogenase (quinone) family. KefG subfamily. As to quaternary structure, interacts with KefB.

The protein resides in the cell inner membrane. It carries out the reaction a quinone + NADH + H(+) = a quinol + NAD(+). It catalyses the reaction a quinone + NADPH + H(+) = a quinol + NADP(+). Its function is as follows. Regulatory subunit of a potassium efflux system that confers protection against electrophiles. Required for full activity of KefB. This Yersinia enterocolitica serotype O:8 / biotype 1B (strain NCTC 13174 / 8081) protein is Glutathione-regulated potassium-efflux system ancillary protein KefG.